Consider the following 132-residue polypeptide: UPF0146 protein PF0123 (132 aa).

Belongs to the UPF0146 family.

This chain is UPF0146 protein PF0123, found in Pyrococcus furiosus (strain ATCC 43587 / DSM 3638 / JCM 8422 / Vc1).